Consider the following 269-residue polypeptide: Gene 51 glycoprotein (269 aa).

4 N-linked (GlcNAc...) asparagine; by host glycosylation sites follow: N53, N58, N74, and N78. Disordered stretches follow at residues L67–Y87 and M103–N137. Positions T76–Y87 are enriched in low complexity. The span at M103–L112 shows a compositional bias: polar residues. Residues S113 to K136 show a composition bias toward low complexity. N137, N161, N170, and N191 each carry an N-linked (GlcNAc...) asparagine; by host glycan.

The chain is Gene 51 glycoprotein (51) from Saimiriine herpesvirus 2 (strain 11) (SaHV-2).